A 296-amino-acid polypeptide reads, in one-letter code: Immediate early response gene 5-like protein (296 aa).

It belongs to the IER family.

The protein is Immediate early response gene 5-like protein (ier5l) of Xenopus tropicalis (Western clawed frog).